Consider the following 105-residue polypeptide: Integration host factor subunit alpha (105 aa).

Belongs to the bacterial histone-like protein family. Heterodimer of an alpha and a beta chain.

Functionally, this protein is one of the two subunits of integration host factor, a specific DNA-binding protein that functions in genetic recombination as well as in transcriptional and translational control. The sequence is that of Integration host factor subunit alpha from Xanthobacter autotrophicus (strain ATCC BAA-1158 / Py2).